Consider the following 901-residue polypeptide: MLIPSKLSRPVRLDHTVVRERLLAKLSGANNFRLALITSPAGYGKTTLISQWAAGKNDIGWYSLDEGDNQQERFASYLIAAVQQATNGHCAICETMAQKRQYASLTSLFAQLFIELAEWHSPLYLVIDDYHLITNPVIHESMRFFIRHQPENLTLVVLSRNLPQLGIANLRVRDQLLEIGSQQLAFTHQEAKQFFDCRLSSPIEAAESSRICDDVSGWATALQLIALSARQNTHSAHKSARRLAGINASHLSDYLVDEVLDNVDLATRHFLLKSAILRSMNDALITRVTGEENGQMRLEEIERQGLFLQRMDDTGEWFCYHPLFGNFLRQRCQWELAAELPEIHRAAAESWMAQGFPSEAIHHALAAGDALMLRDILLNHAWSLFNHSELSLLEESLKALPWDSLLENPQLVLLQAWLMQSQHRYGEVNTLLARAEHEIKDIREDTMHAEFNALRAQVAINDGNPDEAERLAKLALEELPPGWFYSRIVATSVLGEVLHCKGELTRSLALMQQTEQMARQHDVWHYALWSLIQQSEILFAQGFLQTAWETQEKAFQLINEQHLEQLPMHEFLVRIRAQLLWAWARLDEAEASARSGIEVLSSYQPQQQLQCLAMLIQCSLARGDLDNARSQLNRLENLLGNGKYHSDWISNANKVRVIYWQMTGDKAAAANWLRHTAKPEFANNHFLQGQWRNIARAQILLGEFEPAEIVLEELNENARSLRLMSDLNRNLLLLNQLYWQAGRKSDAQRVLLDALKLANRTGFISHFVIEGEAMAQQLRQLIQLNTLPELEQHRAQRILREINQHHRHKFAHFDENFVERLLNHPEVPELIRTSPLTQREWQVLGLIYSGYSNEQIAGELEVAATTIKTHIRNLYQKLGVAHRQDAVQHAQQLLKMMGYGV.

39-46 (SPAGYGKT) is an ATP binding site. The 66-residue stretch at 829-894 (ELIRTSPLTQ…DAVQHAQQLL (66 aa)) folds into the HTH luxR-type domain. The H-T-H motif DNA-binding region spans 853 to 872 (NEQIAGELEVAATTIKTHIR).

This sequence belongs to the MalT family. Monomer in solution. Oligomerizes to an active state in the presence of the positive effectors ATP and maltotriose.

Activated by ATP and maltotriose, which are both required for DNA binding. Functionally, positively regulates the transcription of the maltose regulon whose gene products are responsible for uptake and catabolism of malto-oligosaccharides. Specifically binds to the promoter region of its target genes, recognizing a short DNA motif called the MalT box. The sequence is that of HTH-type transcriptional regulator MalT from Escherichia coli (strain K12 / MC4100 / BW2952).